We begin with the raw amino-acid sequence, 143 residues long: Ribosome-binding factor A (143 aa).

Residues 123 to 143 (VRAQAAQAKPAGEANPYKERN) are disordered. Residues 124-136 (RAQAAQAKPAGEA) show a composition bias toward low complexity.

It belongs to the RbfA family. In terms of assembly, monomer. Binds 30S ribosomal subunits, but not 50S ribosomal subunits or 70S ribosomes.

The protein resides in the cytoplasm. In terms of biological role, one of several proteins that assist in the late maturation steps of the functional core of the 30S ribosomal subunit. Associates with free 30S ribosomal subunits (but not with 30S subunits that are part of 70S ribosomes or polysomes). Required for efficient processing of 16S rRNA. May interact with the 5'-terminal helix region of 16S rRNA. In Corynebacterium urealyticum (strain ATCC 43042 / DSM 7109), this protein is Ribosome-binding factor A.